We begin with the raw amino-acid sequence, 691 residues long: Elongation factor G (691 aa).

Positions 8 to 283 (DMQRNIGIMA…AVVDFLPSPV (276 aa)) constitute a tr-type G domain. GTP is bound by residues 17 to 24 (AHIDAGKT), 81 to 85 (DTPGH), and 135 to 138 (NKMD).

The protein belongs to the TRAFAC class translation factor GTPase superfamily. Classic translation factor GTPase family. EF-G/EF-2 subfamily.

The protein localises to the cytoplasm. Catalyzes the GTP-dependent ribosomal translocation step during translation elongation. During this step, the ribosome changes from the pre-translocational (PRE) to the post-translocational (POST) state as the newly formed A-site-bound peptidyl-tRNA and P-site-bound deacylated tRNA move to the P and E sites, respectively. Catalyzes the coordinated movement of the two tRNA molecules, the mRNA and conformational changes in the ribosome. In Nitratidesulfovibrio vulgaris (strain ATCC 29579 / DSM 644 / CCUG 34227 / NCIMB 8303 / VKM B-1760 / Hildenborough) (Desulfovibrio vulgaris), this protein is Elongation factor G.